We begin with the raw amino-acid sequence, 519 residues long: Protein BANP (519 aa).

Phosphoserine is present on residues S19, S90, and S100. The stretch at 53–90 (IKTICLRLDSIEAKLQALEATCKSLEEKLDLVTNKQHS) forms a coiled coil. Residue K133 forms a Glycyl lysine isopeptide (Lys-Gly) (interchain with G-Cter in SUMO2) linkage. Residues 152–342 (NAVPGRRQNT…FSRRTPNSSS (191 aa)) are interaction with CUX1 and HDAC1. Over residues 168 to 177 (GQEDSHHEDG) the composition is skewed to basic and acidic residues. The tract at residues 168–196 (GQEDSHHEDGESGSEASDSVSSCGQAGSQ) is disordered. The segment covering 180-189 (GSEASDSVSS) has biased composition (low complexity). In terms of domain architecture, BEN spans 226 to 322 (EMRVRCAIIP…SKCRTAWRRK (97 aa)). K275 carries the N6-acetyllysine modification. The disordered stretch occupies residues 327–364 (SLAVKSFSRRTPNSSSYCPSEPMMSTPPPASELPQPQP). The segment covering 335–344 (RRTPNSSSYC) has biased composition (polar residues). 2 positions are modified to phosphothreonine: T337 and T352. Residues 342-393 (SYCPSEPMMSTPPPASELPQPQPQPQALHYALANAQQVQIHQIGEDGQVQVG) form a DNA-binding region. Residues 351–364 (STPPPASELPQPQP) show a composition bias toward pro residues.

The protein belongs to the BANP/SMAR1 family. As to quaternary structure, part of a corepressor complex containing BANP, HDAC1, SIN3A, SIN3B, RBL1 and RBL2. Forms a trimeric complex in the nucleus consisting of BANP, HDAC6 and KHDRBS1/SAM68; HDAC6 keeps KHDRBS1 in a deacetylated state which inhibits the inclusion of CD44 alternate exons. The complex is disrupted by MAPK1/MAPK3-mediated phosphorylation of BANP which results in BANP export to the cytoplasm. This facilitates acetylation of KHDRBS1 and CD44 variant exon inclusion. Interacts with TP53. Interacts with CUX1/CDP. Interacts with HDAC1. Post-translationally, MAPK1/MAPK3-mediated phosphorylation at Thr-337 and Thr-352 results in export to the cytoplasm. In terms of tissue distribution, down-regulated in breast cancer cell lines.

The protein localises to the nucleus. The protein resides in the nucleus speckle. It is found in the cytoplasm. Functionally, controls V(D)J recombination during T-cell development by repressing T-cell receptor (TCR) beta enhancer function. Binds to scaffold/matrix attachment region beta (S/MARbeta), an ATC-rich DNA sequence located upstream of the TCR beta enhancer. Represses cyclin D1 transcription by recruiting HDAC1 to its promoter, thereby diminishing H3K9ac, H3S10ph and H4K8ac levels. Promotes TP53 activation, which causes cell cycle arrest. Plays a role in the regulation of alternative splicing. Binds to CD44 pre-mRNA and negatively regulates the inclusion of CD44 proximal variable exons v2-v6 but has no effect on distal variable exons v7-v10. This chain is Protein BANP (BANP), found in Homo sapiens (Human).